The following is a 284-amino-acid chain: MSKPDLASLEKTIEKAFDERDAISTATRGETRDAIQAALDLLDRGTVRVAERQADGKWHVNQWLKKAVLLSFRLNPMEIIKGGPGQAVWWDKVPSKFDGWSAVDFEKAGFRAVPSSIVRRSAYVAPGAVLMPSFVNVGAYVDTGTMVDTWASVGSCAQIGKNVHLSGGVGIGGVLEPMQAGPTIIEDNCFIGARSEVVEGCIVREGSVLGMGVFIGQSTKIVDRATGEIFYGEVPPNSVVVAGSLPGKPFPNNEPGPGLYCAVIVKRVDAKTRSKTSINELLRD.

Residues Arg111 and Asp148 each coordinate substrate.

Belongs to the transferase hexapeptide repeat family. As to quaternary structure, homotrimer.

Its subcellular location is the cytoplasm. It carries out the reaction (S)-2,3,4,5-tetrahydrodipicolinate + succinyl-CoA + H2O = (S)-2-succinylamino-6-oxoheptanedioate + CoA. It participates in amino-acid biosynthesis; L-lysine biosynthesis via DAP pathway; LL-2,6-diaminopimelate from (S)-tetrahydrodipicolinate (succinylase route): step 1/3. In Mesorhizobium japonicum (strain LMG 29417 / CECT 9101 / MAFF 303099) (Mesorhizobium loti (strain MAFF 303099)), this protein is 2,3,4,5-tetrahydropyridine-2,6-dicarboxylate N-succinyltransferase.